The following is a 113-amino-acid chain: Putative pterin-4-alpha-carbinolamine dehydratase (113 aa).

It belongs to the pterin-4-alpha-carbinolamine dehydratase family.

It catalyses the reaction (4aS,6R)-4a-hydroxy-L-erythro-5,6,7,8-tetrahydrobiopterin = (6R)-L-erythro-6,7-dihydrobiopterin + H2O. This is Putative pterin-4-alpha-carbinolamine dehydratase from Legionella pneumophila (strain Lens).